The following is a 364-amino-acid chain: O-methyltransferase ZRP4 (364 aa).

Gly208, Asp231, Asp251, Met252, and Lys265 together coordinate S-adenosyl-L-methionine. His269 acts as the Proton acceptor in catalysis.

It belongs to the class I-like SAM-binding methyltransferase superfamily. Cation-independent O-methyltransferase family. COMT subfamily. In terms of assembly, homodimer. In terms of tissue distribution, accumulates preferentially in the roots and is located predominantly in the region of the endodermis, low levels are seen in the leaves, stems and other shoot organs.

Functionally, may be involved in the O-methylation of suberin phenylpropanoid precursors. The protein is O-methyltransferase ZRP4 (ZRP4) of Zea mays (Maize).